Reading from the N-terminus, the 110-residue chain is Proline-rich protein 15-like protein A (110 aa).

2 disordered regions span residues 29–51 and 65–110; these read IAGD…TDSQ and TKGR…KSGK. The span at 65–85 shows a compositional bias: basic residues; sequence TKGRHVKVSHSGRFKEKKRIR. A compositionally biased stretch (polar residues) spans 100-110; that stretch reads TTANENNKSGK.

Belongs to the PRR15 family.

In Danio rerio (Zebrafish), this protein is Proline-rich protein 15-like protein A (prr15la).